A 322-amino-acid polypeptide reads, in one-letter code: Gluconeogenesis factor (322 aa).

This sequence belongs to the gluconeogenesis factor family.

It localises to the cytoplasm. In terms of biological role, required for morphogenesis under gluconeogenic growth conditions. This Listeria innocua serovar 6a (strain ATCC BAA-680 / CLIP 11262) protein is Gluconeogenesis factor.